The following is a 272-amino-acid chain: Cyclase-like protein 2 (272 aa).

Residues 1-17 (MAHLATVVLLLVAAARQ) form the signal peptide.

This sequence belongs to the Cyclase 1 superfamily. As to expression, highly expressed in leaf sheaths and flag leaves. Expressed in roots, stems, leaf collars, glumes, young panicles and pistils.

The protein resides in the secreted. It localises to the extracellular space. The protein localises to the extracellular matrix. Functionally, may be involved in response to stresses. This chain is Cyclase-like protein 2, found in Oryza sativa subsp. japonica (Rice).